A 557-amino-acid polypeptide reads, in one-letter code: Potassium-transporting ATPase potassium-binding subunit (557 aa).

12 helical membrane passes run 5–25 (GFLL…PLGS), 63–83 (LSAI…MLLG), 132–152 (GLTV…FALI), 170–190 (LLRI…LFFI), 253–273 (FVQM…FGEV), 283–303 (LLWA…WAEV), 329–349 (VLVS…AVIA), 356–376 (ALGG…FGGV), 379–399 (GLYG…LMIG), 416–436 (LTAL…ALAM), 484–504 (LLAL…MAIA), and 526–546 (LFVG…FIPA).

Belongs to the KdpA family. The system is composed of three essential subunits: KdpA, KdpB and KdpC.

Its subcellular location is the cell inner membrane. Part of the high-affinity ATP-driven potassium transport (or Kdp) system, which catalyzes the hydrolysis of ATP coupled with the electrogenic transport of potassium into the cytoplasm. This subunit binds the periplasmic potassium ions and delivers the ions to the membrane domain of KdpB through an intramembrane tunnel. The protein is Potassium-transporting ATPase potassium-binding subunit of Escherichia coli O6:K15:H31 (strain 536 / UPEC).